We begin with the raw amino-acid sequence, 403 residues long: 3-oxoacyl-[acyl-carrier-protein] synthase 2 (403 aa).

The region spanning 1–403 (VITGMGALSP…GGHNAVLVFK (403 aa)) is the Ketosynthase family 3 (KS3) domain. Residues C158, H297, and H334 each act as for beta-ketoacyl synthase activity in the active site.

This sequence belongs to the thiolase-like superfamily. Beta-ketoacyl-ACP synthases family.

The enzyme catalyses a fatty acyl-[ACP] + malonyl-[ACP] + H(+) = a 3-oxoacyl-[ACP] + holo-[ACP] + CO2. It carries out the reaction (9Z)-hexadecenoyl-[ACP] + malonyl-[ACP] + H(+) = 3-oxo-(11Z)-octadecenoyl-[ACP] + holo-[ACP] + CO2. The protein operates within lipid metabolism; fatty acid biosynthesis. Its function is as follows. Involved in the type II fatty acid elongation cycle. Catalyzes the elongation of a wide range of acyl-ACP by the addition of two carbons from malonyl-ACP to an acyl acceptor. Can efficiently catalyze the conversion of palmitoleoyl-ACP (cis-hexadec-9-enoyl-ACP) to cis-vaccenoyl-ACP (cis-octadec-11-enoyl-ACP), an essential step in the thermal regulation of fatty acid composition. This Staphylococcus aureus protein is 3-oxoacyl-[acyl-carrier-protein] synthase 2 (fabF).